The primary structure comprises 166 residues: uncharacterized protein (166 aa).

Composition is skewed to basic and acidic residues over residues 1-13 (MAEVSKKRCEHNS), 21-112 (KAND…KTKE), and 119-137 (DNVENKDKNEVYENIKEGG). Residues 1 to 144 (MAEVSKKRCE…EGGSKAWNKT (144 aa)) form a disordered region. A run of 8 repeats spans residues 31–41 (DKTKETAGSAK), 42–52 (DKTKETAGSAK), 53–63 (DKTKETAESAK), 64–74 (DKTKETAGSAK), 75–85 (DKTKETAESAK), 86–96 (DKTKETAGSAK), 97–107 (DKTKETAESAK), and 108–118 (DKTKETAGNVR). An 8 X 11 AA approximate tandem repeats of D-K-T-K-E-T-A-G/E-S-A-K region spans residues 31–118 (DKTKETAGSA…KTKETAGNVR (88 aa)).

Belongs to the LEA type 1 family.

This is an uncharacterized protein from Encephalitozoon cuniculi (strain GB-M1) (Microsporidian parasite).